The following is a 98-amino-acid chain: ORF9b protein (98 aa).

The 90-residue stretch at 9-98 (VPPALHLVDP…PDEFVVVTAK (90 aa)) folds into the 9b domain. A Nuclear export signal motif is present at residues 46-54 (ILRLGSQLS).

It belongs to the coronavirus group 2 protein 9b family. As to quaternary structure, homodimer. Interacts with host XPO1; this interaction mediates protein ORF9b export out of the nucleus. Interacts with host MAVS. Interacts with protein ORF6.

The protein localises to the virion. It localises to the host cytoplasmic vesicle membrane. Its subcellular location is the host cytoplasm. The protein resides in the host endoplasmic reticulum. It is found in the host nucleus. The protein localises to the host mitochondrion. In terms of biological role, plays a role in the inhibition of host innate immune response by targeting the mitochondrial-associated adapter MAVS. Mechanistically, usurps the E3 ligase ITCH to trigger the degradation of MAVS, TRAF3, and TRAF6. In addition, causes mitochondrial elongation by triggering ubiquitination and proteasomal degradation of dynamin-like protein 1/DNM1L. The polypeptide is ORF9b protein (Homo sapiens (Human)).